Consider the following 605-residue polypeptide: Capsid scaffolding protein (605 aa).

Residues His-48, Ser-116, and His-139 each act as charge relay system in the active site. Residues 235-274 (ASDAPDLQKPDKALQSPPPASTDPATMLSGNAGEGATACG) are disordered. The tract at residues 281–300 (QDLISVPRNTFMTLLQTNLD) is interaction with pAP. Disordered regions lie at residues 403–431 (DYVP…FPGE) and 489–588 (PHQS…KSVS). A Nuclear localization signal motif is present at residues 410–416 (RSNKRKR). Over residues 568-579 (ASASGVAQSKEP) the composition is skewed to polar residues. The tract at residues 585–605 (KSVSAHLKSIFCEELLNKRVA) is interaction with major capsid protein.

This sequence belongs to the herpesviridae capsid scaffolding protein family. As to quaternary structure, homomultimer. Interacts with major capsid protein. Exists in a monomer-dimer equilibrium with the dimer being the active species. In terms of processing, capsid scaffolding protein is cleaved by assemblin after formation of the spherical procapsid. As a result, the capsid obtains its mature, icosahedral shape. Cleavages occur at two or more sites: release (R-site) and maturation (M-site).

The protein localises to the host cytoplasm. It localises to the host nucleus. It catalyses the reaction Cleaves -Ala-|-Ser- and -Ala-|-Ala- bonds in the scaffold protein.. In terms of biological role, acts as a scaffold protein by binding major capsid protein in the cytoplasm, inducing the nuclear localization of both proteins. Multimerizes in the nucleus such as major capsid protein forms the icosahedral T=16 capsid. Autocatalytic cleavage releases the assembly protein, and subsequently abolishes interaction with major capsid protein. Cleavages products are evicted from the capsid before or during DNA packaging. Functionally, protease that plays an essential role in virion assembly within the nucleus. Catalyzes the cleavage of the assembly protein after formation of the spherical procapsid. By that cleavage, the capsid matures and gains its icosahedral shape. The cleavage sites seem to include -Ala-Ser-, -Ala-Ala-, as well as Ala-Thr bonds. Assemblin and cleavages products are evicted from the capsid before or during DNA packaging. Plays a major role in capsid assembly. Acts as a scaffold protein by binding major capsid protein. Multimerizes in the nucleus such as major capsid protein forms the icosahedral T=16 capsid. Cleaved by assemblin after capsid completion. The cleavages products are evicted from the capsid before or during DNA packaging. The protein is Capsid scaffolding protein of Homo sapiens (Human).